We begin with the raw amino-acid sequence, 119 residues long: DNA-binding protein inhibitor ID-3 (119 aa).

Residues 28 to 80 form the bHLH domain; sequence RGKGPAAEEPLSLLDDMNHCYSRLRELVPGVPRGTQLSQVEILQRVIDYILDL.

In terms of assembly, homodimer, and heterodimer with other HLH proteins. Interacts with COPS5 and COPS7A. Interacts with IFI204. Interacts with GATA4 and NKX2-5. Interacts with ANKRD2; both proteins cooperate in myoblast differentiation. Interacts with CLOCK and BMAL1. As to expression, expressed abundantly in lung, kidney and adrenal gland, but not in adult brain.

It localises to the nucleus. In terms of biological role, transcriptional regulator (lacking a basic DNA binding domain) which negatively regulates the basic helix-loop-helix (bHLH) transcription factors by forming heterodimers and inhibiting their DNA binding and transcriptional activity. Implicated in regulating a variety of cellular processes, including cellular growth, senescence, differentiation, apoptosis, angiogenesis, and neoplastic transformation. Involved in myogenesis by inhibiting skeletal muscle and cardiac myocyte differentiation and promoting muscle precursor cells proliferation. Inhibits the binding of E2A-containing protein complexes to muscle creatine kinase E-box enhancer. Regulates the circadian clock by repressing the transcriptional activator activity of the CLOCK-BMAL1 heterodimer. The chain is DNA-binding protein inhibitor ID-3 (ID3) from Homo sapiens (Human).